Consider the following 423-residue polypeptide: Putative competence-damage inducible protein (423 aa).

It belongs to the CinA family.

The sequence is that of Putative competence-damage inducible protein from Streptococcus equi subsp. zooepidemicus (strain MGCS10565).